The primary structure comprises 225 residues: Holliday junction branch migration complex subunit RuvA (225 aa).

Residues 1–71 form a domain I region; sequence MISWINGDLV…EDSDLLFGFT (71 aa). The domain II stretch occupies residues 72-150; sequence SNEQKNFFIE…SEILSEEEKS (79 aa). The interval 151-161 is flexible linker; that stretch reads KGELEIKDPEI. A domain III region spans residues 161–225; sequence INKMIEDLQL…LDEDSSNIAR (65 aa).

It belongs to the RuvA family. In terms of assembly, homotetramer. Forms an RuvA(8)-RuvB(12)-Holliday junction (HJ) complex. HJ DNA is sandwiched between 2 RuvA tetramers; dsDNA enters through RuvA and exits via RuvB. An RuvB hexamer assembles on each DNA strand where it exits the tetramer. Each RuvB hexamer is contacted by two RuvA subunits (via domain III) on 2 adjacent RuvB subunits; this complex drives branch migration. In the full resolvosome a probable DNA-RuvA(4)-RuvB(12)-RuvC(2) complex forms which resolves the HJ.

The protein resides in the cytoplasm. The RuvA-RuvB-RuvC complex processes Holliday junction (HJ) DNA during genetic recombination and DNA repair, while the RuvA-RuvB complex plays an important role in the rescue of blocked DNA replication forks via replication fork reversal (RFR). RuvA specifically binds to HJ cruciform DNA, conferring on it an open structure. The RuvB hexamer acts as an ATP-dependent pump, pulling dsDNA into and through the RuvAB complex. HJ branch migration allows RuvC to scan DNA until it finds its consensus sequence, where it cleaves and resolves the cruciform DNA. This chain is Holliday junction branch migration complex subunit RuvA, found in Prochlorococcus marinus (strain MIT 9301).